The following is a 539-amino-acid chain: uncharacterized protein (539 aa).

The interval 316 to 433 is disordered; the sequence is AEHHHQKGKK…ATVERSSPPE (118 aa). Over residues 318–352 the composition is skewed to basic residues; sequence HHHQKGKKVPATHRRSSTPHARKTAGTRARTRARK. The span at 362-384 shows a compositional bias: basic and acidic residues; that stretch reads KISKKDSGESKQKDETAGMERVF. Polar residues predominate over residues 390-402; that stretch reads NVRTCSSRASRTG.

This is an uncharacterized protein from Treponema pallidum (strain Nichols).